Here is a 310-residue protein sequence, read N- to C-terminus: Flavin-dependent trigonelline monooxygenase, reductase component (310 aa).

FMN is bound by residues 40–43, 57–63, 90–91, and Arg-97; these read TANS, SIAKTSS, and FA.

Belongs to the non-flavoprotein flavin reductase family. In terms of assembly, homodimer. The trigonelline monooxygenase is composed of a reductase component TgnA and an oxygenase component TgnB.

The catalysed reaction is a reduced flavin + NAD(+) = an oxidized flavin + NADH + 2 H(+). It carries out the reaction FADH2 + NAD(+) = FAD + NADH + 2 H(+). It catalyses the reaction FMNH2 + NAD(+) = FMN + NADH + 2 H(+). Its activity is regulated as follows. Maximal reductase activity is achieved only upon trigonelline (TG) binding to the reductase component before interaction with NADH. It seems that TgnA undergoes an allosteric transition upon trigonelline (TG) binding accounting for the positive cooperativity toward NADH oxidation. Involved in the degradation of the pyridine ring of trigonelline (TG; N-methylnicotinate) into succinate and methylamine as carbon and nitrogen sources, respectively. TgnA catalyzes the reduction of flavin (FMN or FAD) by NADH and supplies the reduced flavin to the oxygenase component TgnB. This chain is Flavin-dependent trigonelline monooxygenase, reductase component, found in Acinetobacter baylyi (strain ATCC 33305 / BD413 / ADP1).